Reading from the N-terminus, the 538-residue chain is NADH-quinone oxidoreductase subunit N (538 aa).

14 consecutive transmembrane segments (helical) span residues 28-48 (LAPV…EAFV), 57-77 (QIIV…TTIA), 94-114 (PTLA…VLFA), 147-167 (HTEV…FAAA), 170-190 (LIMM…LCGM), 206-226 (FLLG…LYGC), 249-269 (IVAG…AVPF), 288-308 (MAVA…YVGL), 315-335 (WQIV…IVGL), 343-363 (LLAY…VGAW), 380-400 (VLVY…LILM), 424-444 (IGVL…TAGF), 458-478 (GYAW…AFYL), and 503-523 (IAGW…GVAP).

Belongs to the complex I subunit 2 family. NDH-1 is composed of 14 different subunits. Subunits NuoA, H, J, K, L, M, N constitute the membrane sector of the complex.

Its subcellular location is the cell membrane. The catalysed reaction is a quinone + NADH + 5 H(+)(in) = a quinol + NAD(+) + 4 H(+)(out). Its function is as follows. NDH-1 shuttles electrons from NADH, via FMN and iron-sulfur (Fe-S) centers, to quinones in the respiratory chain. The immediate electron acceptor for the enzyme in this species is believed to be a menaquinone. Couples the redox reaction to proton translocation (for every two electrons transferred, four hydrogen ions are translocated across the cytoplasmic membrane), and thus conserves the redox energy in a proton gradient. This Cutibacterium acnes (strain DSM 16379 / KPA171202) (Propionibacterium acnes) protein is NADH-quinone oxidoreductase subunit N.